The following is a 698-amino-acid chain: Trafficking protein particle complex III-specific subunit 85 (698 aa).

Disordered stretches follow at residues 82 to 125 (VGQH…LFQR) and 678 to 698 (VDSAPRPSEKNLTRTSVSFIG). A compositionally biased stretch (basic and acidic residues) spans 678 to 689 (VDSAPRPSEKNL).

Belongs to the TRS85 family. In terms of assembly, part of the multisubunit TRAPP (transport protein particle) III complex composed of BET3, BET5, TRS20, TRS23, TRS31, TRS33 and TRS85.

The protein resides in the preautophagosomal structure. Functionally, specific subunit of the TRAPP III complex that acts as an autophagy-specific guanine nucleotide exchange factor (GEF) for YPT1. TRS85 directs the TRAPP III complex to the phagophore assembly site (PAS) that is involved in autophagosome formation. Required for membrane expansion during autophagy and the CVT pathway. Required for sporulation. Has a role late in meiosis following DNA replication. The chain is Trafficking protein particle complex III-specific subunit 85 (TRS85) from Saccharomyces cerevisiae (strain ATCC 204508 / S288c) (Baker's yeast).